The chain runs to 145 residues: L-alanine exporter AlaE (145 aa).

Transmembrane regions (helical) follow at residues 16 to 36 (FALVVYCFIIGMAIEIMLSGM), 42 to 62 (LSSRLLSIPVNIAIAWPYGLY), 86 to 106 (LFAYVSFQSPVYAAILWVIGA), and 111 to 131 (ILTAVTSNLVISMVMGVTYGY).

This sequence belongs to the AlaE exporter family.

Its subcellular location is the cell inner membrane. In terms of biological role, exports L-alanine. The chain is L-alanine exporter AlaE from Pectobacterium parmentieri (strain WPP163) (Pectobacterium wasabiae (strain WPP163)).